The sequence spans 129 residues: NADH-quinone oxidoreductase subunit A (129 aa).

Transmembrane regions (helical) follow at residues 14–34 (LAIH…VAAW), 67–87 (FLIA…FAWA), and 95–115 (WLGL…LVYL).

It belongs to the complex I subunit 3 family. In terms of assembly, NDH-1 is composed of 14 different subunits. Subunits NuoA, H, J, K, L, M, N constitute the membrane sector of the complex.

It is found in the cell inner membrane. The catalysed reaction is a quinone + NADH + 5 H(+)(in) = a quinol + NAD(+) + 4 H(+)(out). NDH-1 shuttles electrons from NADH, via FMN and iron-sulfur (Fe-S) centers, to quinones in the respiratory chain. The immediate electron acceptor for the enzyme in this species is believed to be ubiquinone. Couples the redox reaction to proton translocation (for every two electrons transferred, four hydrogen ions are translocated across the cytoplasmic membrane), and thus conserves the redox energy in a proton gradient. In Rhodopseudomonas palustris (strain BisB5), this protein is NADH-quinone oxidoreductase subunit A.